Reading from the N-terminus, the 250-residue chain is DNA polymerase sliding clamp (250 aa).

Belongs to the PCNA family. In terms of assembly, homotrimer. The subunits circularize to form a toroid; DNA passes through its center. Replication factor C (RFC) is required to load the toroid on the DNA.

Its function is as follows. Sliding clamp subunit that acts as a moving platform for DNA processing. Responsible for tethering the catalytic subunit of DNA polymerase and other proteins to DNA during high-speed replication. This is DNA polymerase sliding clamp from Methanococcus maripaludis (strain C7 / ATCC BAA-1331).